The sequence spans 78 residues: Acyl carrier protein (78 aa).

A Carrier domain is found at 1–76 (MALFEDIQAV…DVVKYIEDNK (76 aa)). Ser-36 carries the post-translational modification O-(pantetheine 4'-phosphoryl)serine.

The protein belongs to the acyl carrier protein (ACP) family. 4'-phosphopantetheine is transferred from CoA to a specific serine of apo-ACP by AcpS. This modification is essential for activity because fatty acids are bound in thioester linkage to the sulfhydryl of the prosthetic group.

It is found in the cytoplasm. Its pathway is lipid metabolism; fatty acid biosynthesis. Carrier of the growing fatty acid chain in fatty acid biosynthesis. The polypeptide is Acyl carrier protein (Helicobacter pylori (strain Shi470)).